The primary structure comprises 543 residues: MAKQLIYDVKAREALLSGVNILADAVKVTLGPKGRNVVIEKAFGGPTVTKDGVTVAKEIELEDKFENMGAQMVKEVASKTSDVAGDGTTTATILAQSIYYEGSKLVAAGANPMALKRGIEKAVQVVVDELKKISKPTKDQKEIAQVGTISANNDPTIGNIIAEAMNKVGKEGVITVEEAKAMETTLEVVEGMQFDRGYISPYFVTDPEKMEVLLNEPLILINEKKISNMKDLLPVLEQIAKMGRPLLIIAEDVEGEALATLVVNKLRGTLHVCAVKAPGFGDRRKAMLDDIAILTGGQVISEEKGIKLESVGLNDLGKAKTIRIDKDNTTIVDGAGDRKALEGRVRQIRTQIDETTSDYDREKLQERLAKMVGGVAVISVGAATETEMKEKKARVEDALNATRAAVEEGIVPGGGVAYLRCLGALGAVNLEGDEKLGLNIVKRALEEPARQIAMNAGEEGSVIVQRVKSETGAFGFDAETSQFCDLIEAGVIDPTKVTRTALLNAASVSALMLTTECMVSEIPKEDKGAPAGMGGMPPGGGMY.

ATP is bound by residues 29–32 (TLGP), Lys50, 86–90 (DGTTT), Gly414, and Asp493. Residues 524 to 543 (KEDKGAPAGMGGMPPGGGMY) form a disordered region. Positions 531 to 543 (AGMGGMPPGGGMY) are enriched in gly residues.

Belongs to the chaperonin (HSP60) family. As to quaternary structure, forms a cylinder of 14 subunits composed of two heptameric rings stacked back-to-back. Interacts with the co-chaperonin GroES.

The protein localises to the cytoplasm. It catalyses the reaction ATP + H2O + a folded polypeptide = ADP + phosphate + an unfolded polypeptide.. Functionally, together with its co-chaperonin GroES, plays an essential role in assisting protein folding. The GroEL-GroES system forms a nano-cage that allows encapsulation of the non-native substrate proteins and provides a physical environment optimized to promote and accelerate protein folding. This is Chaperonin GroEL 1 from Syntrophobacter fumaroxidans (strain DSM 10017 / MPOB).